A 229-amino-acid chain; its full sequence is Juvenile hormone-binding protein (229 aa).

An N-terminal signal peptide occupies residues 1 to 3 (VLS).

It localises to the secreted. In terms of biological role, prevents juvenile hormone from being hydrolyzed by general esterases by combining with it specifically. The polypeptide is Juvenile hormone-binding protein (JHBP) (Manduca sexta (Tobacco hawkmoth)).